Consider the following 326-residue polypeptide: MSIPPVIFLPIFFYSSFVQAFNAPECIDKGQYFASFMELENEPVILPCPQINTISSGYNILDILWEKRGADNDRIIPIDNGSNMLILNPTQSDSGIYICITKNETYCDMMSLNLTIVSVSESNIDLISYTQIVNERTTGEMVCPNINAFIASNVNADIIWSGHRRLRNKRLRQRTPGIITIEDVRKNDAGYYTCVLKYTYGDKTYDVTRIVKLEVRDRMIPPTMQLPDGVVTSIGSNLTIACRVSLRPPTTDADVFWISNGMYYEEDDEDGDGRISVANKIYTTDKRRVITSRLKINPVKEEDATTFTCMAFTIPSISKTVTISIT.

The N-terminal stretch at 1–18 (MSIPPVIFLPIFFYSSFV) is a signal peptide. Ig-like C2-type domains lie at 24–115 (PECI…LNLT), 122–208 (SNID…YDVT), and 221–322 (PPTM…KTVT). Residues cysteine 48 and cysteine 99 are joined by a disulfide bond. 3 N-linked (GlcNAc...) asparagine; by host glycosylation sites follow: asparagine 80, asparagine 103, and asparagine 113. Cysteines 143 and 194 form a disulfide. Asparagine 237 carries N-linked (GlcNAc...) asparagine; by host glycosylation. A disulfide bridge links cysteine 242 with cysteine 309.

It belongs to the interleukin-1 receptor family. In terms of assembly, interacts with mouse Il1b.

It is found in the secreted. Functionally, may reduce the host inflammatory response by interacting with inteleukin-1 beta (Il1b) and thus decreasing the association between IL1B and its cellular receptor. The sequence is that of Interleukin-1-binding protein (OPG201) from Bos taurus (Bovine).